The sequence spans 390 residues: Probable galacturonosyltransferase-like 9 (390 aa).

Topologically, residues 1-10 (MRLRFPMKSA) are cytoplasmic. Residues 11–31 (VLAFAIFLVFIPLFSVGIRMI) traverse the membrane as a helical; Signal-anchor for type II membrane protein segment. Topologically, residues 32–390 (PGRLTAVSAT…SELTEDSSFF (359 aa)) are lumenal. Residues N205 and N223 are each glycosylated (N-linked (GlcNAc...) asparagine).

Belongs to the glycosyltransferase 8 family.

The protein localises to the golgi apparatus membrane. It functions in the pathway glycan metabolism; pectin biosynthesis. Functionally, may be involved in pectin and/or xylans biosynthesis in cell walls. The polypeptide is Probable galacturonosyltransferase-like 9 (GATL9) (Arabidopsis thaliana (Mouse-ear cress)).